The following is an 86-amino-acid chain: Large ribosomal subunit protein bL27 (86 aa).

Residues 1 to 24 (MATKKAGGSSRNGRDSAGRRLGVK) are disordered.

It belongs to the bacterial ribosomal protein bL27 family.

This Rickettsia felis (strain ATCC VR-1525 / URRWXCal2) (Rickettsia azadi) protein is Large ribosomal subunit protein bL27.